The chain runs to 345 residues: Phenylalanine--tRNA ligase alpha subunit (345 aa).

Mg(2+) is bound at residue glutamate 259.

The protein belongs to the class-II aminoacyl-tRNA synthetase family. Phe-tRNA synthetase alpha subunit type 1 subfamily. Tetramer of two alpha and two beta subunits. Mg(2+) is required as a cofactor.

Its subcellular location is the cytoplasm. It catalyses the reaction tRNA(Phe) + L-phenylalanine + ATP = L-phenylalanyl-tRNA(Phe) + AMP + diphosphate + H(+). This is Phenylalanine--tRNA ligase alpha subunit from Nitrosomonas europaea (strain ATCC 19718 / CIP 103999 / KCTC 2705 / NBRC 14298).